A 445-amino-acid chain; its full sequence is RCC1 domain-containing protein RUG3, mitochondrial (445 aa).

The transit peptide at 1–22 (MAALSHRLRSFTRRFSSTRTTQ) directs the protein to the mitochondrion. 7 RCC1 repeats span residues 47–101 (TLQL…DSSS), 118–169 (DGDL…ALTH), 171–221 (GDVF…AITE), 222–279 (SGEL…ALTK), 280–331 (EGQL…ALTE), 333–383 (GKVL…AITD), and 385–442 (GELW…CLVS).

Interacts with ATM. Mostly expressed in roots and rosette leaves of young seedlings, and, to a lower extent, in the flowers and siliques of mature plants. Preferentially expressed in the vascular tissues.

It localises to the mitochondrion. In terms of biological role, regulates DNA damage response (DDR) synergistically with ATM. Together with ATM, involved in the splicing of the ND2/NAD2 mRNA. Required for the accumulation of mitochondrial respiratory chain complex I. Negative regulator of plant responses to abscisic acid (ABA). May have a pivotal role in vegetative growth and the phase transition from vegetative to reproductive growth. This is RCC1 domain-containing protein RUG3, mitochondrial from Arabidopsis thaliana (Mouse-ear cress).